The following is a 209-amino-acid chain: Peptidyl-tRNA hydrolase (209 aa).

Residue Tyr-14 coordinates tRNA. His-19 acts as the Proton acceptor in catalysis. Residues Tyr-68, Asn-70, and Asn-116 each coordinate tRNA.

This sequence belongs to the PTH family. Monomer.

It localises to the cytoplasm. The catalysed reaction is an N-acyl-L-alpha-aminoacyl-tRNA + H2O = an N-acyl-L-amino acid + a tRNA + H(+). In terms of biological role, hydrolyzes ribosome-free peptidyl-tRNAs (with 1 or more amino acids incorporated), which drop off the ribosome during protein synthesis, or as a result of ribosome stalling. Catalyzes the release of premature peptidyl moieties from peptidyl-tRNA molecules trapped in stalled 50S ribosomal subunits, and thus maintains levels of free tRNAs and 50S ribosomes. The protein is Peptidyl-tRNA hydrolase of Phenylobacterium zucineum (strain HLK1).